Reading from the N-terminus, the 359-residue chain is Peptide chain release factor 1 (359 aa).

Q236 is modified (N5-methylglutamine).

The protein belongs to the prokaryotic/mitochondrial release factor family. Methylated by PrmC. Methylation increases the termination efficiency of RF1.

It localises to the cytoplasm. Functionally, peptide chain release factor 1 directs the termination of translation in response to the peptide chain termination codons UAG and UAA. The chain is Peptide chain release factor 1 from Streptococcus pyogenes serotype M18 (strain MGAS8232).